Consider the following 121-residue polypeptide: Small ribosomal subunit protein uS13 (121 aa).

Residues 94 to 121 (GLPVRGQNTKNNSRTRKGPRRTVANKKK) form a disordered region. Positions 106-121 (SRTRKGPRRTVANKKK) are enriched in basic residues.

This sequence belongs to the universal ribosomal protein uS13 family. Part of the 30S ribosomal subunit. Forms a loose heterodimer with protein S19. Forms two bridges to the 50S subunit in the 70S ribosome.

Located at the top of the head of the 30S subunit, it contacts several helices of the 16S rRNA. In the 70S ribosome it contacts the 23S rRNA (bridge B1a) and protein L5 of the 50S subunit (bridge B1b), connecting the 2 subunits; these bridges are implicated in subunit movement. Contacts the tRNAs in the A and P-sites. The sequence is that of Small ribosomal subunit protein uS13 from Exiguobacterium sibiricum (strain DSM 17290 / CCUG 55495 / CIP 109462 / JCM 13490 / 255-15).